Reading from the N-terminus, the 133-residue chain is Profilin (133 aa).

This sequence belongs to the profilin family.

Its function is as follows. More likely to influence phosphoinositide metabolism than actin assembly. This is Profilin from Camelus.